Here is an 848-residue protein sequence, read N- to C-terminus: Alanine--tRNA ligase (848 aa).

The Zn(2+) site is built by histidine 553, histidine 557, cysteine 654, and histidine 658.

It belongs to the class-II aminoacyl-tRNA synthetase family. Requires Zn(2+) as cofactor.

It is found in the cytoplasm. It carries out the reaction tRNA(Ala) + L-alanine + ATP = L-alanyl-tRNA(Ala) + AMP + diphosphate. Catalyzes the attachment of alanine to tRNA(Ala) in a two-step reaction: alanine is first activated by ATP to form Ala-AMP and then transferred to the acceptor end of tRNA(Ala). Also edits incorrectly charged Ser-tRNA(Ala) and Gly-tRNA(Ala) via its editing domain. In Neorickettsia sennetsu (strain ATCC VR-367 / Miyayama) (Ehrlichia sennetsu), this protein is Alanine--tRNA ligase.